Here is a 618-residue protein sequence, read N- to C-terminus: Cell pattern formation-associated protein STU1 (618 aa).

Residues 13–28 are compositionally biased toward polar residues; it reads MSAGPTQQPPTVTSYN. Residues 13-105 are disordered; that stretch reads MSAGPTQQPP…FDTSGQIAPP (93 aa). Residues 48 to 59 show a composition bias toward low complexity; that stretch reads YGGYPYTNGMPS. The span at 91 to 101 shows a compositional bias: polar residues; that stretch reads NQYSGFDTSGQ. In terms of domain architecture, HTH APSES-type spans 110–216; sequence RVTATLWEDE…HNISALLYHP (107 aa). Positions 144–165 form a DNA-binding region, H-T-H motif; it reads GTKLLNVAGMTRGRRDGILKSE. 2 disordered regions span residues 229–355 and 390–618; these read AERR…YDGS and SEMG…SRRR. Composition is skewed to polar residues over residues 256–266, 284–298, 305–326, and 336–355; these read MSQNGSQSLSG, TSASSAVNMGSSDSF, AMSNGQQNPMSIDTSLSNTRSM, and GSTLQSMQAYPPASQSYDGS. Over residues 438–451 the composition is skewed to basic and acidic residues; that stretch reads DHEHDPEYTHDSRT. Polar residues predominate over residues 452 to 476; that stretch reads YDNSQSQYNYTAPPVSSISSEQAHV. Over residues 494–512 the composition is skewed to low complexity; the sequence is PRSAAAPQAYYQQAYSTSP. Residues 513-563 show a composition bias toward polar residues; sequence RSATHQSTSNLYNVMSNDRGSTTNGSANGDVYSQSTDLSNGYATPVTNGNA. The nuclear localization domain stretch occupies residues 566–588; the sequence is KRGRDDDDDRSSSSGQMDLKRRK.

It belongs to the EFG1/PHD1/stuA family.

The protein resides in the nucleus. Its function is as follows. Transcription factor that regulates asexual reproduction. Binds the StuA-response elements (StRE) with the consensus sequence 5'-(A/T)CGCG(T/A)N(A/C)-3' at the promoters of target genes. Required for appressorium-mediated infection of rice leaves due to its involvement in the mobilization of lipids and glycogen. The protein is Cell pattern formation-associated protein STU1 of Pyricularia oryzae (strain 70-15 / ATCC MYA-4617 / FGSC 8958) (Rice blast fungus).